A 585-amino-acid chain; its full sequence is 1-deoxy-D-xylulose-5-phosphate synthase (585 aa).

Thiamine diphosphate-binding positions include histidine 80 and 121 to 123 (GHS). A Mg(2+)-binding site is contributed by aspartate 152. Thiamine diphosphate is bound by residues 153–154 (GS), asparagine 181, tyrosine 259, and glutamate 334. Asparagine 181 contacts Mg(2+).

It belongs to the transketolase family. DXPS subfamily. In terms of assembly, homodimer. Mg(2+) serves as cofactor. It depends on thiamine diphosphate as a cofactor.

It carries out the reaction D-glyceraldehyde 3-phosphate + pyruvate + H(+) = 1-deoxy-D-xylulose 5-phosphate + CO2. Its pathway is metabolic intermediate biosynthesis; 1-deoxy-D-xylulose 5-phosphate biosynthesis; 1-deoxy-D-xylulose 5-phosphate from D-glyceraldehyde 3-phosphate and pyruvate: step 1/1. Catalyzes the acyloin condensation reaction between C atoms 2 and 3 of pyruvate and glyceraldehyde 3-phosphate to yield 1-deoxy-D-xylulose-5-phosphate (DXP). The chain is 1-deoxy-D-xylulose-5-phosphate synthase from Buchnera aphidicola subsp. Schizaphis graminum (strain Sg).